The primary structure comprises 99 residues: Protein RnfH (99 aa).

Belongs to the UPF0125 (RnfH) family.

The protein is Protein RnfH of Tolumonas auensis (strain DSM 9187 / NBRC 110442 / TA 4).